Reading from the N-terminus, the 336-residue chain is MIKIKNLKKYYGKELVINDVSLEIKKGEIYAIVGHSGAGKSTLLRCINGLENYQEGSLKVFDQEIKDLSQKKSKELRMLRKDIGMIFQNFALMERKNVFENVAMPLRTHYTQCKFHAKLFNKEYMSEKEIAQKVNSLLEIVGLDHKNKSYPRELSGGQKQRVAIARALALNPKILLSDEATSALDPNTTKNILELISKINAEFGITVVLVTHEMDVVKDIAQKALLLEHGQIIGSGAIDELFLRPNAKMKEFLGESDFLPEHGLNIKLYFPKEVAQNSVITHMARTLNIDFNIVWGKIEKLNGKALGNLVININEKDKDKVLDYIEKSGVLWEVAS.

Positions 2 to 254 (IKIKNLKKYY…PNAKMKEFLG (253 aa)) constitute an ABC transporter domain. 34 to 41 (GHSGAGKS) lines the ATP pocket.

The protein belongs to the ABC transporter superfamily. Methionine importer (TC 3.A.1.24) family. In terms of assembly, the complex is composed of two ATP-binding proteins (MetN), two transmembrane proteins (MetI) and a solute-binding protein (MetQ).

The protein localises to the cell inner membrane. It carries out the reaction L-methionine(out) + ATP + H2O = L-methionine(in) + ADP + phosphate + H(+). The catalysed reaction is D-methionine(out) + ATP + H2O = D-methionine(in) + ADP + phosphate + H(+). Part of the ABC transporter complex MetNIQ involved in methionine import. Responsible for energy coupling to the transport system. This Campylobacter jejuni subsp. jejuni serotype O:2 (strain ATCC 700819 / NCTC 11168) protein is Methionine import ATP-binding protein MetN.